The chain runs to 214 residues: Sugar transporter SWEET1 (214 aa).

7 consecutive transmembrane segments (helical) span residues 3 to 23, 38 to 58, 65 to 85, 93 to 113, 125 to 145, 157 to 177, and 181 to 201; these read WMWL…SSGL, IQFL…YYGY, LIIV…AYIL, VVSQ…YFTL, LGLF…ADLA, SFPL…YGWV, and LYIT…FWLF. The MtN3/slv 1 domain occupies 6–89; sequence LLSGACIVFT…MAAYILYSLE (84 aa). A MtN3/slv 2 domain is found at 124–207; that stretch reads QLGLFCSIFT…FWLFSRYPPD (84 aa).

The protein belongs to the SWEET sugar transporter family.

The protein localises to the golgi apparatus membrane. It is found in the cell membrane. Its function is as follows. Mediates sugar transport across membranes. The chain is Sugar transporter SWEET1 (slc50a1) from Xenopus tropicalis (Western clawed frog).